A 541-amino-acid polypeptide reads, in one-letter code: Tetratricopeptide repeat protein 8 (541 aa).

One copy of the TPR 1 repeat lies at 14–47; the sequence is YFRRRKFQLCADLCTQMLEKSPYDQEPDPELPVH. The tract at residues 118 to 137 is disordered; sequence PITGFLRPSTQSGRPGTMEQ. TPR repeat units lie at residues 251–284, 285–317, 318–351, 352–385, 386–419, 423–456, and 457–490; these read WWWK…QEMV, DTFL…FPGE, VTLL…DNTH, VEAI…GIYN, GQLF…AENE, ADVW…NNNH, and AEAY…APHM.

In terms of assembly, part of BBSome complex, that contains BBS1, BBS2, BBS4, BBS5, BBS7, BBS8/TTC8, BBS9 and BBIP10. Interacts with PCM1. Interacts with CCDC28B. Interacts with PKD1. Widely expressed.

It localises to the cytoplasm. Its subcellular location is the cytoskeleton. The protein localises to the microtubule organizing center. The protein resides in the centrosome. It is found in the cell projection. It localises to the cilium membrane. Its subcellular location is the centriolar satellite. The protein localises to the cilium. Functionally, the BBSome complex is thought to function as a coat complex required for sorting of specific membrane proteins to the primary cilia. The BBSome complex is required for ciliogenesis but is dispensable for centriolar satellite function. This ciliogenic function is mediated in part by the Rab8 GDP/GTP exchange factor, which localizes to the basal body and contacts the BBSome. Rab8(GTP) enters the primary cilium and promotes extension of the ciliary membrane. Firstly the BBSome associates with the ciliary membrane and binds to RAB3IP/Rabin8, the guanosyl exchange factor (GEF) for Rab8 and then the Rab8-GTP localizes to the cilium and promotes docking and fusion of carrier vesicles to the base of the ciliary membrane. The BBSome complex, together with the LTZL1, controls SMO ciliary trafficking and contributes to the sonic hedgehog (SHH) pathway regulation. Required for proper BBSome complex assembly and its ciliary localization. This chain is Tetratricopeptide repeat protein 8 (TTC8), found in Homo sapiens (Human).